The sequence spans 561 residues: MLEKFSSKFNVLKHSTTNGLLSVQINPNDIYEAVLFVRDNIGFEILADIVCVDNLYIDKEKRFSLYYIFRKISSENLCIYIDIDINQSVKSVESIYKSANWGERECFDQFGVKFENHPNLKRILNHKDFQGYPLRKDYPITKYQVLYESDDLVGEMKNEMQRAGLASEENDEFKTKYTFLNIGPSHPATHGTIRNFVALDGEKIISCVTEIGYLHRGFEKACENHSYAQIIPYTDRLNYCSAMLNNVGYAKAVEEALGLNLPDRGIFMRVILGELARIIDHEVCLGAMFVDMGGLTNYWYLYNPRERIYNFLSKLTGARFTNSFARIGGMANDFYDGWKEELLAHLKDVEKGVDDTMILIEKNRIFLDRVQNICKINANDALSYGFSGPNLRASGVSFDLRKDKPYYYYDSFDFSVPVGSEGDIYDRMFVRFFEMRESISIIRQAIKLIPEGKISVDDKDVFLPSKDQVYSNIESLINHFKLIFDGIKLPNGHFYSASEGANGELGFFIFSNSEPNPYRVKLRPPCFYALNAFSSMVQGSLIADSILNLGSLNIIAGELDR.

An NADH dehydrogenase I subunit C region spans residues Met1–Leu152. Residues Lys176 to Arg561 are NADH dehydrogenase I subunit D.

In the N-terminal section; belongs to the complex I 30 kDa subunit family. It in the C-terminal section; belongs to the complex I 49 kDa subunit family. NDH-1 is composed of 13 different subunits. Subunits NuoB, CD, E, F, and G constitute the peripheral sector of the complex.

Its subcellular location is the cell inner membrane. The catalysed reaction is a quinone + NADH + 5 H(+)(in) = a quinol + NAD(+) + 4 H(+)(out). In terms of biological role, NDH-1 shuttles electrons from NADH, via FMN and iron-sulfur (Fe-S) centers, to quinones in the respiratory chain. The immediate electron acceptor for the enzyme in this species is believed to be ubiquinone. Couples the redox reaction to proton translocation (for every two electrons transferred, four hydrogen ions are translocated across the cytoplasmic membrane), and thus conserves the redox energy in a proton gradient. The sequence is that of NADH-quinone oxidoreductase subunit C/D from Campylobacter fetus subsp. fetus (strain 82-40).